The following is a 175-amino-acid chain: tRNA-specific adenosine deaminase 2 (175 aa).

The CMP/dCMP-type deaminase domain maps to 8 to 133; the sequence is EEIQNWMHKA…SVLNVSGDDI (126 aa). Histidine 59 is a binding site for Zn(2+). Glutamate 61 serves as the catalytic Proton donor. Positions 95 and 98 each coordinate Zn(2+).

It belongs to the cytidine and deoxycytidylate deaminase family. ADAT2 subfamily. Requires Zn(2+) as cofactor.

It carries out the reaction adenosine(34) in tRNA + H2O + H(+) = inosine(34) in tRNA + NH4(+). Functionally, probably participates in deamination of adenosine-34 to inosine in many tRNAs. This is tRNA-specific adenosine deaminase 2 (adat2) from Xenopus laevis (African clawed frog).